The chain runs to 134 residues: MTKVTTQSLETLVETLSSLTVLELSALKKLLEEKWDVTAAAPVMAVAAGAAGAGAEAAPAESTEFAVTLEEVPADKKIGVLKVVREVTGLALKEAKEMTEGLPKVVKEKTSKSDAEETVKKLQEAGAKASFKGL.

This sequence belongs to the bacterial ribosomal protein bL12 family. Homodimer. Part of the ribosomal stalk of the 50S ribosomal subunit. Forms a multimeric L10(L12)X complex, where L10 forms an elongated spine to which 2 to 4 L12 dimers bind in a sequential fashion. Binds GTP-bound translation factors.

Its function is as follows. Forms part of the ribosomal stalk which helps the ribosome interact with GTP-bound translation factors. Is thus essential for accurate translation. The sequence is that of Large ribosomal subunit protein bL12 from Chlamydia abortus (strain DSM 27085 / S26/3) (Chlamydophila abortus).